Consider the following 489-residue polypeptide: MPPGGGGPMKDCEYSQISTHSSSPMESPHKKKKIAARRKWEVFPGRNKFFCNGRIMMARQTGVFYLTLILILVTSGLFFAFDCRYLAEKITPAIPVVGGILFFFVMGTLLRTSFSDPGVLPRATPDEAADLERQIDIANGTSSGGYRPPPRTKEVVINGQTVKLKYCFTCKIFRPPRASHCSLCDNCVEQFDHHCPWVGNCVGKRNYRFFYMFILSLSFLTVFIFAFVITHVIHRSQQKGFLDALKDSPASVLEAVICFFSVWSIIGLSGFHTYLISSNQTTNEDIKGSWSNKRGKENYNPYSYGNIFTNCCVALCGPISPSLIDRRGYVQPDTPQPAAPSNGITMYGATQSQSDMCDQDQCIQSTKFVLQAAATPLLQSEPSLTSEELHMPGKPGLGTPCASLTLGQPTPPSSMPNLATEATLSDIMPLKDEHGGHQFLTPDEAPSPPRMLGAGSPLAHSRTMHMLGLASQDSLHEDSVRGLVKLSSV.

Residues 1 to 60 (MPPGGGGPMKDCEYSQISTHSSSPMESPHKKKKIAARRKWEVFPGRNKFFCNGRIMMARQ) lie on the Cytoplasmic side of the membrane. A helical membrane pass occupies residues 61–81 (TGVFYLTLILILVTSGLFFAF). Residues 82–89 (DCRYLAEK) are Lumenal-facing. Residues 90 to 110 (ITPAIPVVGGILFFFVMGTLL) form a helical membrane-spanning segment. Over 111–208 (RTSFSDPGVL…GNCVGKRNYR (98 aa)) the chain is Cytoplasmic. In terms of domain architecture, DHHC spans 165 to 215 (KYCFTCKIFRPPRASHCSLCDNCVEQFDHHCPWVGNCVGKRNYRFFYMFIL). Cys-195 serves as the catalytic S-palmitoyl cysteine intermediate. A helical membrane pass occupies residues 209–229 (FFYMFILSLSFLTVFIFAFVI). Residues 230 to 255 (THVIHRSQQKGFLDALKDSPASVLEA) lie on the Lumenal side of the membrane. A helical transmembrane segment spans residues 256 to 276 (VICFFSVWSIIGLSGFHTYLI). Over 277–489 (SSNQTTNEDI…VRGLVKLSSV (213 aa)) the chain is Cytoplasmic. The disordered stretch occupies residues 434–454 (HGGHQFLTPDEAPSPPRMLGA). Ser-456 is subject to Phosphoserine.

This sequence belongs to the DHHC palmitoyltransferase family. ERF2/ZDHHC9 subfamily.

The protein resides in the endoplasmic reticulum membrane. Its subcellular location is the golgi apparatus membrane. It catalyses the reaction L-cysteinyl-[protein] + hexadecanoyl-CoA = S-hexadecanoyl-L-cysteinyl-[protein] + CoA. Its function is as follows. Palmitoyltransferase that could catalyze the addition of palmitate onto various protein substrates. May have a palmitoyltransferase activity toward the beta-2 adrenergic receptor/ADRB2 and thereby regulate G protein-coupled receptor signaling. May play a role in cell differentiation and apoptosis. This chain is Palmitoyltransferase ZDHHC14, found in Mus musculus (Mouse).